A 636-amino-acid polypeptide reads, in one-letter code: Outer spore wall assembly protein SHE10 (636 aa).

The first 23 residues, 1–23 (MRLVSKLLKALLVLLLAFGSVRY), serve as a signal peptide directing secretion. Coiled coils occupy residues 433–460 (RAHL…LFEE) and 551–584 (KANL…TEFE). The segment at 565–607 (QQREKEKAESASMKASTEFELSSSSFSSSSPSTASSCTASSTS) is disordered. Positions 579-607 (ASTEFELSSSSFSSSSPSTASSCTASSTS) are enriched in low complexity.

It belongs to the SHE10 family. Component of the mitochondria-localized RNase mitochondrial RNA-processing (RNase MRP) composed of one single RNA encoded by the NME1 gene and at least 31 proteins. Absent in the nucleus-localized RNase MRP (NuMRP).

The protein localises to the mitochondrion. Its function is as follows. Involved in spore wall assembly. May be a component of the mitochondrial RNase MRP (MtMRP), a ribonucleoprotein endoribonuclease involved in the cleaving RNA transcripts to generate primers for DNA replication in mitochondria. The protein is Outer spore wall assembly protein SHE10 of Kluyveromyces lactis (strain ATCC 8585 / CBS 2359 / DSM 70799 / NBRC 1267 / NRRL Y-1140 / WM37) (Yeast).